Consider the following 183-residue polypeptide: Extracellular superoxide dismutase [Cu-Zn] (183 aa).

The N-terminal stretch at 1 to 32 (MTMLQQILLISVIIGTVHVHEVDCANEVLKAR) is a signal peptide. The N-linked (GlcNAc...) asparagine glycan is linked to N63. Residues H77, H79, and H94 each contribute to the Cu cation site. C88 and C177 are joined by a disulfide. 4 residues coordinate Zn(2+): H94, H102, H111, and D114. A Cu cation-binding site is contributed by H151.

It belongs to the Cu-Zn superoxide dismutase family. Cu cation is required as a cofactor. Zn(2+) serves as cofactor.

Its subcellular location is the secreted. It localises to the extracellular space. The enzyme catalyses 2 superoxide + 2 H(+) = H2O2 + O2. Functionally, destroys radicals which are normally produced within the cells and which are toxic to biological systems. This Haemonchus contortus (Barber pole worm) protein is Extracellular superoxide dismutase [Cu-Zn] (SOD).